The sequence spans 206 residues: HTH-type transcriptional regulator Hpr (206 aa).

Residues alanine 13–glycine 157 form the HTH marR-type domain. The segment at residues isoleucine 63–glutamate 86 is a DNA-binding region (H-T-H motif). The tract at residues serine 186–valine 206 is disordered.

As to quaternary structure, homodimer.

In terms of biological role, negative regulator of protease production and sporulation. The polypeptide is HTH-type transcriptional regulator Hpr (Bacillus pumilus (strain SAFR-032)).